The following is a 187-amino-acid chain: Elongation factor P (187 aa).

The protein belongs to the elongation factor P family.

It is found in the cytoplasm. Its pathway is protein biosynthesis; polypeptide chain elongation. In terms of biological role, involved in peptide bond synthesis. Stimulates efficient translation and peptide-bond synthesis on native or reconstituted 70S ribosomes in vitro. Probably functions indirectly by altering the affinity of the ribosome for aminoacyl-tRNA, thus increasing their reactivity as acceptors for peptidyl transferase. In Pseudarthrobacter chlorophenolicus (strain ATCC 700700 / DSM 12829 / CIP 107037 / JCM 12360 / KCTC 9906 / NCIMB 13794 / A6) (Arthrobacter chlorophenolicus), this protein is Elongation factor P.